The chain runs to 355 residues: Ataxin-3-like protein (355 aa).

Residues 1-180 (MDFIFHEKQE…DCEADQLLQI (180 aa)) enclose the Josephin domain. Cysteine 14 functions as the Nucleophile in the catalytic mechanism. Histidine 119 (proton acceptor) is an active-site residue. Residue asparagine 134 is part of the active site. Disordered regions lie at residues 209-230 (LEKV…EDFQ) and 253-331 (LSMQ…DISE). Residues 215–228 (ESDESGTSDQDEED) show a composition bias toward acidic residues. 2 consecutive UIM domains span residues 224-243 (QDEE…TNRE) and 244-258 (DEHL…MQGS). A compositionally biased stretch (polar residues) spans 253 to 276 (LSMQGSSGNTSQDLPKTSCVTPAS). Positions 278 to 293 (QPKKIKEDYFEKHQQE) are enriched in basic and acidic residues.

Widely expressed.

The protein resides in the nucleus. The catalysed reaction is Thiol-dependent hydrolysis of ester, thioester, amide, peptide and isopeptide bonds formed by the C-terminal Gly of ubiquitin (a 76-residue protein attached to proteins as an intracellular targeting signal).. Deubiquitinating enzyme that cleaves both 'Lys-48'-linked and 'Lys-63'-linked poly-ubiquitin chains (in vitro). Acts as a deubiquitinating enzyme for the transcription factor KLF5, playing a role in the regulation of KLF5 stability. This chain is Ataxin-3-like protein, found in Homo sapiens (Human).